Reading from the N-terminus, the 187-residue chain is Peptide deformylase (187 aa).

Residues cysteine 114 and histidine 157 each contribute to the Fe cation site. Glutamate 158 is a catalytic residue. Histidine 161 provides a ligand contact to Fe cation.

The protein belongs to the polypeptide deformylase family. Fe(2+) serves as cofactor.

The enzyme catalyses N-terminal N-formyl-L-methionyl-[peptide] + H2O = N-terminal L-methionyl-[peptide] + formate. Its function is as follows. Removes the formyl group from the N-terminal Met of newly synthesized proteins. Requires at least a dipeptide for an efficient rate of reaction. N-terminal L-methionine is a prerequisite for activity but the enzyme has broad specificity at other positions. The chain is Peptide deformylase from Enterococcus faecalis (strain ATCC 700802 / V583).